A 281-amino-acid polypeptide reads, in one-letter code: NADH-cytochrome b5 reductase 1 (281 aa).

The chain crosses the membrane as a helical span at residues 2 to 22; the sequence is VPGKFIFTATFVLLCTIIAVV. The region spanning 37 to 141 is the FAD-binding FR-type domain; it reads EKLQEFPLVA…RGPKGFYHYQ (105 aa). Residues 121–136 and 147–179 contribute to the FAD site; these read AQLNIGDKIKVRGPKG and EIGMIAGGTGIAPMYQIMKSIFANDSDKTKVSL.

This sequence belongs to the flavoprotein pyridine nucleotide cytochrome reductase family. As to quaternary structure, monomer. Component of the 2-(3-amino-3-carboxypropyl)histidine synthase complex composed of DPH1, DPH2, DPH3 and a NADH-dependent reductase, predominantly CBR1. Requires FAD as cofactor.

It localises to the mitochondrion outer membrane. The catalysed reaction is 2 Fe(III)-[cytochrome b5] + NADH = 2 Fe(II)-[cytochrome b5] + NAD(+) + H(+). The enzyme catalyses 2 Fe(3+)-[Dph3] + NADH = 2 Fe(2+)-[Dph3] + NAD(+) + H(+). It functions in the pathway protein modification; peptidyl-diphthamide biosynthesis. NADH-dependent reductase for DPH3 and cytochrome b5. Required for the first step of diphthamide biosynthesis, a post-translational modification of histidine which occurs in elongation factor 2. DPH1 and DPH2 transfer a 3-amino-3-carboxypropyl (ACP) group from S-adenosyl-L-methionine (SAM) to a histidine residue, the reaction is assisted by a reduction system comprising DPH3 and a NADH-dependent reductase, predominantly CBR1. By reducing DPH3, also involved in the formation of the tRNA wobble base modification mcm5s 2U (5-methoxycarbonylmethyl-2-thiouridine), mediated by the elongator complex. The cytochrome b5/NADH cytochrome b5 reductase electron transfer system supports the catalytic activity of several sterol biosynthetic enzymes. The protein is NADH-cytochrome b5 reductase 1 (CBR1) of Kluyveromyces lactis (strain ATCC 8585 / CBS 2359 / DSM 70799 / NBRC 1267 / NRRL Y-1140 / WM37) (Yeast).